Here is a 338-residue protein sequence, read N- to C-terminus: uncharacterized protein (338 aa).

This is an uncharacterized protein from Acanthamoeba polyphaga (Amoeba).